A 456-amino-acid chain; its full sequence is Glycine receptor subunit alpha-4 (456 aa).

The signal sequence occupies residues Met1–Ala27. At Lys28–Tyr256 the chain is on the extracellular side. N-linked (GlcNAc...) asparagine glycosylation occurs at Asn71. Cystine bridges form between Cys171–Cys185 and Cys232–Cys243. Residue Tyr236 to Phe241 participates in strychnine binding. A helical transmembrane segment spans residues Tyr257 to Ile278. The Cytoplasmic portion of the chain corresponds to Asn279–Ala283. The chain crosses the membrane as a helical span at residues Pro284 to Ser304. Residues Arg305–Lys315 lie on the Extracellular side of the membrane. A helical membrane pass occupies residues Ala316 to Ala336. The Cytoplasmic segment spans residues Ala337–Thr423. Residues Ile424–Tyr444 traverse the membrane as a helical segment. The Extracellular portion of the chain corresponds to Lys445–Leu456.

The protein belongs to the ligand-gated ion channel (TC 1.A.9) family. Glycine receptor (TC 1.A.9.3) subfamily. GLRA4 sub-subfamily. Homopentamer (in vitro). Heteropentamer composed of GLRA4 and GLRB. Detected in the retina inner plexiform layer, especially at the border between layer three and four (at protein level).

It localises to the postsynaptic cell membrane. The protein localises to the synapse. It is found in the perikaryon. Its subcellular location is the cell projection. The protein resides in the dendrite. It localises to the cell membrane. It catalyses the reaction chloride(in) = chloride(out). With respect to regulation, inhibited by strychnine. In terms of biological role, glycine receptors are ligand-gated chloride channels. Channel opening is triggered by extracellular glycine. Channel opening is also triggered by taurine and beta-alanine. Plays a role in the down-regulation of neuronal excitability. Contributes to the generation of inhibitory postsynaptic currents. The polypeptide is Glycine receptor subunit alpha-4 (Glra4) (Mus musculus (Mouse)).